The primary structure comprises 59 residues: Anti-inflammatory peptide amregulin (59 aa).

The signal sequence occupies residues 1 to 19 (MKLHMLNMLNCLLLTVCDG).

In terms of tissue distribution, salivary glands.

It localises to the secreted. In terms of biological role, anti-inflammatory peptide that may facilitate successful blood feeding of ticks and may lead to immunotolerance in its host. Inhibits the secretion of inflammatory factors in rat splenocytes, such as tumor necrosis factor-alpha (TNF), interleukin-1, interleukin-8 (CXCL8) and interferon-gamma (IFNG). In addition, shows strong free radical scavenging and antioxidant activities in vitro. In vivo, inhibits adjuvant-induced paw inflammation in mouse models. This chain is Anti-inflammatory peptide amregulin, found in Amblyomma variegatum (Tropical bont tick).